A 289-amino-acid polypeptide reads, in one-letter code: MQRLVARAPAKVNLTLRILRRRPDGFHDLASIVAFAGACDVVTLESDAPLGLAVAGPSAAAAGPDADNLILRAADAFARHVPGARLGRFTLTKRLPVAAGIGGGSSDAAAALRLLAQINDIALDDPRLHAAAREVGADVPVCLDPQARIMEGIGERLSEPLGLAPLFAVLVNCRVPVPTADVFRTLGLRAGEDLAGLPHEAPMSTGRAAVMRHLVLHGNDLEPPAETVAPEITRVKAMLAQEPEVRLVRMSGSGATVFALTDDCRAAAQVARRVAAAEPGWWVRPTVLR.

K11 is a catalytic residue. 96–106 (PVAAGIGGGSS) lines the ATP pocket. D138 is a catalytic residue.

This sequence belongs to the GHMP kinase family. IspE subfamily.

It carries out the reaction 4-CDP-2-C-methyl-D-erythritol + ATP = 4-CDP-2-C-methyl-D-erythritol 2-phosphate + ADP + H(+). Its pathway is isoprenoid biosynthesis; isopentenyl diphosphate biosynthesis via DXP pathway; isopentenyl diphosphate from 1-deoxy-D-xylulose 5-phosphate: step 3/6. Functionally, catalyzes the phosphorylation of the position 2 hydroxy group of 4-diphosphocytidyl-2C-methyl-D-erythritol. The protein is 4-diphosphocytidyl-2-C-methyl-D-erythritol kinase of Azorhizobium caulinodans (strain ATCC 43989 / DSM 5975 / JCM 20966 / LMG 6465 / NBRC 14845 / NCIMB 13405 / ORS 571).